We begin with the raw amino-acid sequence, 1615 residues long: Regulating synaptic membrane exocytosis protein 1 (1615 aa).

The disordered stretch occupies residues 1-26 (MSSAVGPRGPRPPTVPPPMQELPDLS). The segment covering 9 to 20 (GPRPPTVPPPMQ) has biased composition (pro residues). A RabBD domain is found at 22 to 205 (LPDLSHLTEE…TKSGAWFFGS (184 aa)). The FYVE-type zinc finger occupies 133-193 (KDDAPTCGIC…VCNLCRKQQE (61 aa)). 8 residues coordinate Zn(2+): Cys139, Cys142, Cys155, Cys158, Cys163, Cys166, Cys185, and Cys188. The interval 205-569 (SGPQQPSQDG…CEDVELESES (365 aa)) is disordered. Residues 206–222 (GPQQPSQDGTLSDTATG) are compositionally biased toward polar residues. Positions 227 to 240 (VPREKKARLQERSR) are enriched in basic and acidic residues. Over residues 241–256 (SQTPLSTAAVSSQDTA) the composition is skewed to polar residues. The span at 327-379 (ADERERKERRETRRLEKGRSQDYSDRPEKRDNGRVAEDQKQRKEEEYQTRYRS) shows a compositional bias: basic and acidic residues. A compositionally biased stretch (basic residues) spans 399 to 410 (MHARVSRARHER). The span at 421 to 459 (EAAAAAPAEATAGKRAPATARVSPPESPRARAAAAQPPT) shows a compositional bias: low complexity. A compositionally biased stretch (pro residues) spans 460-475 (EHGPPPPRPAPGPAEP). Residues 476-489 (PEPRVPEPLRKQGR) show a composition bias toward basic and acidic residues. Residues 511–523 (RNDSLSSDQSESV) show a composition bias toward polar residues. Position 514 is a phosphoserine (Ser514). Residues 529-541 (KPHRPKRGGKRRQ) are compositionally biased toward basic residues. A compositionally biased stretch (acidic residues) spans 559–569 (SCEDVELESES). Ser592 is modified (phosphoserine). The PDZ domain occupies 619 to 705 (RTTMPKESGA…EPQVEIIVSR (87 aa)). The tract at residues 712–746 (RIPESSHPPLESSSSSFESQKMERPSISVISPTSP) is disordered. Residues 714–730 (PESSHPPLESSSSSFES) show a composition bias toward low complexity. Phosphoserine is present on residues Ser742 and Ser745. A C2 1 domain is found at 756-879 (LPGQLSVKLW…ALLDDEPHWY (124 aa)). The segment at 884–1201 (HDESSLPLPQ…RQLPQVPVRS (318 aa)) is disordered. Position 895 is a phosphoserine (Ser895). A compositionally biased stretch (polar residues) spans 949–958 (ATTLTVPEQQ). Position 991 is a phosphoserine (Ser991). Basic and acidic residues predominate over residues 1006 to 1023 (RHHDASRSPADHRSRHVE). The residue at position 1045 (Ser1045) is a Phosphoserine. The span at 1078–1092 (SPERERHSRKSERCS) shows a compositional bias: basic and acidic residues. Polar residues predominate over residues 1173-1187 (QGSPTQSPPADTSFG). Ser1175 is subject to Phosphoserine. Thr1177 is subject to Phosphothreonine. Phosphoserine occurs at positions 1179, 1231, 1233, 1234, 1262, 1263, and 1265. Residues 1256–1313 (DNASAKSSDSDVSDVSAISRASSTSRLSSTSFMSEQSERPRGRISSFTPKMQGRRMGT) form a disordered region. Positions 1268–1289 (SDVSAISRASSTSRLSSTSFMS) are enriched in low complexity. Ser1339 bears the Phosphoserine mark. A disordered region spans residues 1368–1397 (RSRSTSQLSQTESGHKKLKSTIQRSTETGM). A C2 2 domain is found at 1461–1579 (AMGDIQIGME…DLSSMVIGWY (119 aa)). Ser1600, Ser1603, Ser1606, and Ser1615 each carry phosphoserine.

Interacts with RAB3C, RAB10, RAB26 and RAB37. Binds SNAP25, SYT1 and CACNA1B. Interaction with SYT1 is enhanced by calcium ions. Interaction with SNAP25 is weaker in the presence of calcium ions. Binds RAB3A, RAB3B and RAB3D that have been activated by GTP-binding. Binds UNC13A. Interacts with TSPOAP1 and RIMBP2. Interacts with PPFIA3 and PPFIA4. Interacts with ERC1. In terms of processing, phosphorylated by BRSK1. In terms of tissue distribution, highly expressed in hippocampus, brain cortex, cerebellum and olfactory bulb. Detected at lower levels in midbrain, hindbrain and spinal cord. Detected retina and in spinal cord motor neurons.

Its subcellular location is the cell membrane. It is found in the synapse. It localises to the presynaptic cell membrane. Its function is as follows. Rab effector involved in exocytosis. May act as scaffold protein that regulates neurotransmitter release at the active zone. Essential for maintaining normal probability of neurotransmitter release and for regulating release during short-term synaptic plasticity. Plays a role in dendrite formation by melanocytes. The protein is Regulating synaptic membrane exocytosis protein 1 (Rims1) of Rattus norvegicus (Rat).